The primary structure comprises 457 residues: uncharacterized protein (457 aa).

This is an uncharacterized protein from Acanthamoeba polyphaga mimivirus (APMV).